A 191-amino-acid polypeptide reads, in one-letter code: Ribosomal RNA large subunit methyltransferase E (191 aa).

S-adenosyl-L-methionine is bound by residues G49, W51, D66, D82, and D105. Residue K145 is the Proton acceptor of the active site.

The protein belongs to the class I-like SAM-binding methyltransferase superfamily. RNA methyltransferase RlmE family.

It is found in the cytoplasm. The catalysed reaction is uridine(2552) in 23S rRNA + S-adenosyl-L-methionine = 2'-O-methyluridine(2552) in 23S rRNA + S-adenosyl-L-homocysteine + H(+). Specifically methylates the uridine in position 2552 of 23S rRNA at the 2'-O position of the ribose in the fully assembled 50S ribosomal subunit. The polypeptide is Ribosomal RNA large subunit methyltransferase E (Archaeoglobus fulgidus (strain ATCC 49558 / DSM 4304 / JCM 9628 / NBRC 100126 / VC-16)).